A 536-amino-acid chain; its full sequence is Beta-hexosaminidase subunit beta (536 aa).

An N-terminal signal peptide occupies residues 1-31; it reads MPQSPRSAPGLLLLQALVSLVSLALVAPARL. The N-linked (GlcNAc...) asparagine glycan is linked to Asn-63. A disulfide bond links Cys-70 and Cys-116. N-linked (GlcNAc...) asparagine glycans are attached at residues Asn-169 and Asn-306. 2 disulfide bridges follow: Cys-288–Cys-339 and Cys-513–Cys-530. Glu-334 functions as the Proton donor in the catalytic mechanism.

This sequence belongs to the glycosyl hydrolase 20 family. As to quaternary structure, there are 3 forms of beta-hexosaminidase: hexosaminidase A is a heterodimer composed of one subunit alpha and one subunit beta (chain A and B); hexosaminidase B is a homodimer of two beta subunits (two chains A and B); hexosaminidase S is a homodimer of two alpha subunits. The composition of the dimer (isozyme A versus isozyme S) has a significant effect on the substrate specificity of the alpha subunit active site.

It is found in the lysosome. Its subcellular location is the cytoplasmic vesicle. The protein resides in the secretory vesicle. It localises to the cortical granule. It carries out the reaction Hydrolysis of terminal non-reducing N-acetyl-D-hexosamine residues in N-acetyl-beta-D-hexosaminides.. The enzyme catalyses N-acetyl-beta-D-galactosaminyl-(1-&gt;4)-beta-D-3-sulfogalactosyl-(1-&gt;4)-beta-D-glucosyl-(1&lt;-&gt;1')-ceramide + H2O = a beta-D-3-sulfogalactosyl-(1-&gt;4)-beta-D-glucosyl-(1&lt;-&gt;1')-ceramide + N-acetyl-beta-D-galactosamine. The catalysed reaction is a ganglioside GM2 (d18:1(4E)) + H2O = a ganglioside GM3 (d18:1(4E)) + N-acetyl-beta-D-galactosamine. It catalyses the reaction a ganglioside GM2 + H2O = a ganglioside GM3 + N-acetyl-beta-D-galactosamine. It carries out the reaction beta-D-GalNAc-(1-&gt;4)-alpha-L-IdoA-(1-&gt;3)-beta-D-GalNAc-4-sulfate-(1-&gt;4)-alpha-L-IdoA-(1-&gt;3)-D-GalNAc-4-sulfate + H2O = alpha-L-IdoA-(1-&gt;3)-beta-D-GalNAc-4-sulfate-(1-&gt;4)-alpha-L-IdoA-(1-&gt;3)-D-GalNAc-4-sulfate + N-acetyl-D-galactosamine. The enzyme catalyses N-acetyl-beta-D-6-sulfogalactosaminyl-(1-&gt;4)-alpha-L-iduronyl-(1-&gt;3)-N-acetyl-D-6-sulfogalactosamine + H2O = alpha-L-iduronyl-(1-&gt;3)-N-acetyl-D-6-sulfogalactosamine + N-acetyl-D-6-sulfogalactosamine. With respect to regulation, addition of GM2A stimulates the hydrolysis of sulfated glycosphingolipid SM2 and the ganglioside GM2. Hydrolyzes the non-reducing end N-acetyl-D-hexosamine and/or sulfated N-acetyl-D-hexosamine of glycoconjugates, such as the oligosaccharide moieties from proteins and neutral glycolipids, or from certain mucopolysaccharides. The isozyme B does not hydrolyze each of these substrates, however hydrolyzes efficiently neutral oligosaccharide. Only the isozyme A is responsible for the degradation of GM2 gangliosides in the presence of GM2A. During fertilization is responsible, at least in part, for the zona block to polyspermy. Present in the cortical granules of non-activated oocytes, is exocytosed during the cortical reaction in response to oocyte activation and inactivates the sperm galactosyltransferase-binding site, accounting for the block in sperm binding to the zona pellucida. The polypeptide is Beta-hexosaminidase subunit beta (Mus musculus (Mouse)).